The chain runs to 308 residues: Cytochrome b (308 aa).

Transmembrane regions (helical) follow at residues 1-21 (SGSLLGMCLIVRIITGLFLAA), 45-66 (WLIRNLHANGASLFFICIYLHI), 81-101 (WNIGVILLLALMATAFVGYVL), and 146-166 (FFALHFLLPFVIAGLTLVHLT). Heme b-binding residues include His-51 and His-65. The heme b site is built by His-150 and His-164. His-169 contacts a ubiquinone. A run of 3 helical transmembrane segments spans residues 194–214 (TKDVLGFALLLTPLIALALFS), 256–276 (LGGVLALAASVLVLFLIPLLH), and 288–308 (LSQILFWALVANLLVLTWVGS).

The protein belongs to the cytochrome b family. As to quaternary structure, the cytochrome bc1 complex contains 11 subunits: 3 respiratory subunits (MT-CYB, CYC1 and UQCRFS1), 2 core proteins (UQCRC1 and UQCRC2) and 6 low-molecular weight proteins (UQCRH/QCR6, UQCRB/QCR7, UQCRQ/QCR8, UQCR10/QCR9, UQCR11/QCR10 and a cleavage product of UQCRFS1). This cytochrome bc1 complex then forms a dimer. It depends on heme b as a cofactor.

It is found in the mitochondrion inner membrane. Its function is as follows. Component of the ubiquinol-cytochrome c reductase complex (complex III or cytochrome b-c1 complex) that is part of the mitochondrial respiratory chain. The b-c1 complex mediates electron transfer from ubiquinol to cytochrome c. Contributes to the generation of a proton gradient across the mitochondrial membrane that is then used for ATP synthesis. The chain is Cytochrome b (MT-CYB) from Garritornis isidorei (Papuan babbler).